A 197-amino-acid chain; its full sequence is 3-isopropylmalate dehydratase small subunit (197 aa).

This sequence belongs to the LeuD family. LeuD type 1 subfamily. Heterodimer of LeuC and LeuD.

The enzyme catalyses (2R,3S)-3-isopropylmalate = (2S)-2-isopropylmalate. Its pathway is amino-acid biosynthesis; L-leucine biosynthesis; L-leucine from 3-methyl-2-oxobutanoate: step 2/4. Functionally, catalyzes the isomerization between 2-isopropylmalate and 3-isopropylmalate, via the formation of 2-isopropylmaleate. The chain is 3-isopropylmalate dehydratase small subunit from Mycolicibacterium vanbaalenii (strain DSM 7251 / JCM 13017 / BCRC 16820 / KCTC 9966 / NRRL B-24157 / PYR-1) (Mycobacterium vanbaalenii).